The sequence spans 492 residues: Probable Xaa-Pro aminopeptidase ACLA_020440 (492 aa).

The Mn(2+) site is built by aspartate 272, aspartate 283, glutamate 421, and glutamate 460.

The protein belongs to the peptidase M24B family. Mn(2+) is required as a cofactor.

The enzyme catalyses Release of any N-terminal amino acid, including proline, that is linked to proline, even from a dipeptide or tripeptide.. In terms of biological role, catalyzes the removal of a penultimate prolyl residue from the N-termini of peptides. This chain is Probable Xaa-Pro aminopeptidase ACLA_020440, found in Aspergillus clavatus (strain ATCC 1007 / CBS 513.65 / DSM 816 / NCTC 3887 / NRRL 1 / QM 1276 / 107).